Reading from the N-terminus, the 320-residue chain is MENNKKQGVLLVNLGTPDSATPAGVRRFLSEFLHDKRVVNLTRWLWCPILHGVILPIRAPKVAKLYQSVWMDEGSPLLVYSQRQAEKLQKKLQIPVALGMTYGNPSLKTGVEQLMDQGVEDIIVLPLYPQYSGTTTAAVSDGLTKAFKQMPVIPSYRFIRDYYAHPSYAKALAESVRSHWDKNGRADHLVCSFHGIPKRLADEGDIYPQHCEATTELLAAELGLSADDITMTYQSRFGREEWLKPYTDETLESLPSKGIKKIDIMAPAFSVDCLETLEEISDQCKETFIDAGGSDFSYITCLNDRDSHIDMMAELVALYR.

Histidine 194 and glutamate 275 together coordinate Fe cation.

It belongs to the ferrochelatase family.

Its subcellular location is the cytoplasm. The enzyme catalyses heme b + 2 H(+) = protoporphyrin IX + Fe(2+). Its pathway is porphyrin-containing compound metabolism; protoheme biosynthesis; protoheme from protoporphyrin-IX: step 1/1. Its function is as follows. Catalyzes the ferrous insertion into protoporphyrin IX. The protein is Ferrochelatase of Vibrio atlanticus (strain LGP32) (Vibrio splendidus (strain Mel32)).